A 163-amino-acid polypeptide reads, in one-letter code: uncharacterized protein (163 aa).

Residues 101–162 are a coiled coil; the sequence is LESMKVERKP…KMGERILERE (62 aa).

This is an uncharacterized protein from Aquifex aeolicus (strain VF5).